The chain runs to 425 residues: Serine/threonine-protein kinase VRK1 (425 aa).

The region spanning 38 to 329 (WKLGSAVGQG…KLRGILQQGL (292 aa)) is the Protein kinase domain. ATP-binding positions include 44–52 (VGQGGFGLL) and K72. Catalysis depends on D178, which acts as the Proton acceptor. Residues 343 to 425 (GVATNSTSLP…KSRGRPKKNS (83 aa)) are disordered. The span at 415 to 425 (KKSRGRPKKNS) shows a compositional bias: basic residues.

The protein belongs to the protein kinase superfamily. CK1 Ser/Thr protein kinase family. VRK subfamily.

The protein localises to the nucleus. It is found in the cytoplasm. It localises to the cajal body. The catalysed reaction is L-seryl-[protein] + ATP = O-phospho-L-seryl-[protein] + ADP + H(+). The enzyme catalyses L-threonyl-[protein] + ATP = O-phospho-L-threonyl-[protein] + ADP + H(+). Serine/threonine kinase involved in the regulation of key cellular processes including the cell cycle, nuclear condensation, transcription regulation, and DNA damage response. Controls chromatin organization and remodeling by mediating phosphorylation of histone H3 on 'Thr-4' and histone H2AX (H2aXT4ph). It also phosphorylates KAT5 in response to DNA damage, promoting KAT5 association with chromatin and histone acetyltransferase activity. Is involved in the regulation of cell cycle progression of neural progenitors, and is required for proper cortical neuronal migration. Is involved in neurite elongation and branching in motor neurons, and has an essential role in Cajal bodies assembly, acting through COIL phosphorylation and the control of coilin degradation. Involved in Golgi disassembly during the cell cycle: following phosphorylation by PLK3 during mitosis, it is required to induce Golgi fragmentation. Phosphorylates BANF1: disrupts its ability to bind DNA, reduces its binding to LEM domain-containing proteins and causes its relocalization from the nucleus to the cytoplasm. Phosphorylates TP53BP1 and p53/TP53 on 'Thr-18', preventing the interaction between p53/TP53 and MDM2. Phosphorylates ATF2 which activates its transcriptional activity. Phosphorylates JUN. This Danio rerio (Zebrafish) protein is Serine/threonine-protein kinase VRK1 (vrk1).